Consider the following 309-residue polypeptide: Probable lipid kinase YegS-like (309 aa).

Positions 1-134 constitute a DAGKc domain; the sequence is MTTPRWRLIL…IDLLRVDADG (134 aa). ATP-binding positions include T39, 65 to 71, and T96; that span reads GDGTLSA. L219, D222, and L224 together coordinate Mg(2+). Catalysis depends on E280, which acts as the Proton acceptor.

This sequence belongs to the diacylglycerol/lipid kinase family. YegS lipid kinase subfamily. The cofactor is Mg(2+). It depends on Ca(2+) as a cofactor.

The protein localises to the cytoplasm. Its function is as follows. Probably phosphorylates lipids; the in vivo substrate is unknown. This chain is Probable lipid kinase YegS-like, found in Stenotrophomonas maltophilia (strain K279a).